Consider the following 256-residue polypeptide: MRILLSNDDGVHSPGLVALYEGLKGLGELKVVAPDRDHSGASNALTLNRPLTVEQHPNGFRSVDGTPTDCVHLAVNGLFDTAFDRVVSGINTHANLGDDIIYSGTVAAATEGRHLGLPAIAVSLVNNGHFHYDTAARVVRLLLEYKQALKLGPRSILNVNVPDLPWERLSGFRVTRLGHRERAEGAVPMTCPRGKQRYWIGAAGQGGDAGPGTDFHAVREGYVSITPVHIDMTRHEALSGLREWVDGMDESTGGQP.

D8, D9, S39, and N91 together coordinate a divalent metal cation.

The protein belongs to the SurE nucleotidase family. Requires a divalent metal cation as cofactor.

The protein resides in the cytoplasm. The enzyme catalyses a ribonucleoside 5'-phosphate + H2O = a ribonucleoside + phosphate. Functionally, nucleotidase that shows phosphatase activity on nucleoside 5'-monophosphates. The polypeptide is 5'-nucleotidase SurE (Marinobacter nauticus (strain ATCC 700491 / DSM 11845 / VT8) (Marinobacter aquaeolei)).